Reading from the N-terminus, the 117-residue chain is Ig heavy chain V region 108A (117 aa).

The first 19 residues, 1–19 (MGWSWIFLFLLSGTAGVHS), serve as a signal peptide directing secretion. An Ig-like domain is found at 20–117 (EVQLQQSGPE…EDSAVYYCAR (98 aa)).

The sequence is that of Ig heavy chain V region 108A (Igh-VJ558) from Mus musculus (Mouse).